Here is a 265-residue protein sequence, read N- to C-terminus: Phosphonoacetaldehyde hydrolase (265 aa).

The active-site Nucleophile is the D10. Mg(2+) contacts are provided by D10 and A12. Catalysis depends on K51, which acts as the Schiff-base intermediate with substrate. D184 is a Mg(2+) binding site.

Belongs to the HAD-like hydrolase superfamily. PhnX family. Homodimer. Mg(2+) is required as a cofactor.

The catalysed reaction is phosphonoacetaldehyde + H2O = acetaldehyde + phosphate + H(+). Functionally, involved in phosphonate degradation. This is Phosphonoacetaldehyde hydrolase from Latilactobacillus sakei subsp. sakei (strain 23K) (Lactobacillus sakei subsp. sakei).